The following is a 374-amino-acid chain: Anhydro-N-acetylmuramic acid kinase (374 aa).

Position 12–19 (12–19) interacts with ATP; it reads GTSLDGVD.

The protein belongs to the anhydro-N-acetylmuramic acid kinase family.

It catalyses the reaction 1,6-anhydro-N-acetyl-beta-muramate + ATP + H2O = N-acetyl-D-muramate 6-phosphate + ADP + H(+). Its pathway is amino-sugar metabolism; 1,6-anhydro-N-acetylmuramate degradation. The protein operates within cell wall biogenesis; peptidoglycan recycling. Its function is as follows. Catalyzes the specific phosphorylation of 1,6-anhydro-N-acetylmuramic acid (anhMurNAc) with the simultaneous cleavage of the 1,6-anhydro ring, generating MurNAc-6-P. Is required for the utilization of anhMurNAc either imported from the medium or derived from its own cell wall murein, and thus plays a role in cell wall recycling. In Enterobacter sp. (strain 638), this protein is Anhydro-N-acetylmuramic acid kinase.